The chain runs to 517 residues: MLHETTNLAPLGQPWIAGLVVVSAVLYLLYSTQRWRANNIPLLNDAGPFDFLQATAVNRFRRDARQLIKSGFDSHRDVFAMRTDVGVELFASPEYADQFRNHPSLKVFPFTAKMHHGHLPGFELCRSQPVEDRIFIESVRVQLAQSLGKLIQPLASDIGQAISDRWPSESGWEEIALGSVVERTISQGTSSVYCLDKAWPEFVVKMEMALGMASAALSAWPVMLRRIVAKFLPECLELYRTMDAGRELMSRDMRRRTALQASTGEAPLNFFEWFKEASHGEEHDELILNLRIAFASMHGLCDHLVKILLRLSEDPQLVDDLRKEVIQVYKTHGWSKTALYHLKLMDSAFKEVQRVDPILFGMPTPISLVQTHSNYETAVGRVAVDDVTLKDGLVIRKGQSIRISGHTMWDEDKYPDAAHFDAYRFYKLRQAPGQENTAQFTSPTSDHLGFGYGGRACPGRFFAAAVLKISLCHLLMKYDIKPADGETGPHVWEFAAAINANMAAKVLVRRRQPEIQL.

The helical transmembrane segment at 8 to 28 (LAPLGQPWIAGLVVVSAVLYL) threads the bilayer. Position 457 (C457) interacts with heme.

It belongs to the cytochrome P450 family. The cofactor is heme.

It is found in the membrane. Its pathway is secondary metabolite biosynthesis; terpenoid biosynthesis. Its function is as follows. Cytochrome P450 monooxygenase; part of the gene cluster that mediates the biosynthesis of calidodehydroaustin, a fungal meroterpenoid. The first step of the pathway is the synthesis of 3,5-dimethylorsellinic acid by the polyketide synthase ausA. 3,5-dimethylorsellinic acid is then prenylated by the polyprenyl transferase ausN. Further epoxidation by the FAD-dependent monooxygenase ausM and cyclization by the probable terpene cyclase ausL lead to the formation of protoaustinoid A. Protoaustinoid A is then oxidized to spiro-lactone preaustinoid A3 by the combined action of the FAD-binding monooxygenases ausB and ausC, and the dioxygenase ausE. Acid-catalyzed keto-rearrangement and ring contraction of the tetraketide portion of preaustinoid A3 by ausJ lead to the formation of preaustinoid A4. The aldo-keto reductase ausK, with the help of ausH, is involved in the next step by transforming preaustinoid A4 into isoaustinone which is in turn hydroxylated by the P450 monooxygenase ausI to form austinolide. The cytochrome P450 monooxygenase ausG modifies austinolide to austinol. Austinol is further acetylated to austin by the O-acetyltransferase ausP, which spontaneously changes to dehydroaustin. The cytochrome P450 monooxygenase ausR then converts dehydroaustin is into 7-dehydrodehydroaustin. The hydroxylation catalyzed by ausR permits the O-acetyltransferase ausQ to add an additional acetyl group to the molecule, leading to the formation of acetoxydehydroaustin. The short chain dehydrogenase ausT catalyzes the reduction of the double bond present between carbon atoms 1 and 2 to convert 7-dehydrodehydroaustin into 1,2-dihydro-7-hydroxydehydroaustin. AusQ catalyzes not only an acetylation reaction but also the addition of the PKS ausV diketide product to 1,2-dihydro-7-hydroxydehydroaustin, forming precalidodehydroaustin. Finally, the iron/alpha-ketoglutarate-dependent dioxygenase converts precalidodehydroaustin into calidodehydroaustin. This chain is Cytochrome P450 monooxygenase ausI, found in Aspergillus calidoustus.